Consider the following 124-residue polypeptide: Small ribosomal subunit protein uS12c (124 aa).

A disordered region spans residues 105–124 (AGVKDRRQSRSKYGAKRPKA). Residues 113–124 (SRSKYGAKRPKA) are compositionally biased toward basic residues.

It belongs to the universal ribosomal protein uS12 family. In terms of assembly, part of the 30S ribosomal subunit.

The protein localises to the plastid. It is found in the cyanelle. Functionally, with S4 and S5 plays an important role in translational accuracy. Located at the interface of the 30S and 50S subunits. The chain is Small ribosomal subunit protein uS12c (rps12) from Cyanophora paradoxa.